The chain runs to 152 residues: Clitocypin-5 (152 aa).

In terms of assembly, homodimer.

Its function is as follows. Binds and inhibits cysteine proteinases. Inhibits most strongly papain and cathepsin L, more weakly bromelain and cathepsin B while it is completely ineffective against cathepsin H. This is Clitocypin-5 (clt5) from Clitocybe nebularis (Clouded agaric).